We begin with the raw amino-acid sequence, 1095 residues long: SPAMPVPGPMGPMGPRGPPGSPGASGPQGFTGPPGEPGEAGSAGAMGPRGPAGPPGKNGEDGESGKPGRGGERGPPGPQGARGFSGLDGAKGDSGPAGPKGESGAPGENGTPGAMGPRGLPGERGRTGAAGAAGARGNDGAAGAAGPPGPTGPAGPPGFPGGPGAKGDAGAQGGRGPEGPAGARGEPGNPGPAGAAGPSGNPGTDGAAGPKGTPGAAGVAGAPGFPGPRGPSGPQGAAGAPGPKGNTGEVGAPGAKGEAGAKGEAGAPGVQGPPGPSGEEGKRGARGEPGAAGARGAPGERGGPGGRGFPGSDGPAGPKGATGERGAPGAVGPKGATGESGRTGEPGLPGAKGMTGSPGSPGPDGKTGPAGPSGQDGRPGPPGPVGARGQPGVMGFPGPKGAAGEGGKPGERGVMGPTGAAGAPGKDGDVGAPGPSGPAGPAGERGEQGPAGAPGFQGLPGPQGALGETGKPGEQGLPGEAGATGPAGARGDRGFPGERGAPGALGPAGARGSPGSXGNDGAKGDAGAPGAPGAQGPPGLQGMPGERGAAGLPGLRGDRGDQGAKGADGAPGKDGPRGLTGPLGLPGPAGATGDKGEPGPAGPVGPGGARGAPGERGESGPPGPAGFAGPPGADGQPGAKGEAGDNGAKGDAGPPGAAGPTGAPGPQGPVGNTGPKGARGAAGPPGATGFPGAAGRVGPPGPSGNPGPPGPAGGPGKEGPKGNRGETGPAGRTGEVGAAGPPGPAGEKSAGLPGPQGLAGQRGLPGQRGERGFPGLPGPAXEPGKPGPSGPGGERGPPGPMGPPGLAGAPGEPGREGSPGNEGSAGRDGAAGPKGDRGESGPSGAPGAPGPPGAPGPVGPAGKNGDRGETGPAGPAGSAGPAGPRGPAGALGLRGDKGESGEAGERGMKGHRGFTGMQGPPGPAGSSGEQGPAGAAGPAGPRGPAGSAGSPGKDGMSGLPGPTGPPGPRSGEMGPAGPPGPPGPPGAPGAPGGGFDLGFLSQPQEKAPDPYRMYDDANVLRDRDLEVDSTLKSLSQQLEQLRSPDGTRFTYSVLEDGCTSHTGTWGKLPLLDLAPMDVGAPDQEFGLEVGPVCFL.

Over residues 1–21 (SPAMPVPGPMGPMGPRGPPGS) the composition is skewed to pro residues. Residues 1–1011 (SPAMPVPGPM…QPQEKAPDPY (1011 aa)) form a disordered region. Over residues 22-49 (PGASGPQGFTGPPGEPGEAGSAGAMGPR) the composition is skewed to low complexity. Residues 58 to 72 (NGEDGESGKPGRGGE) are compositionally biased toward basic and acidic residues. Positions 127–145 (TGAAGAAGARGNDGAAGAA) are enriched in low complexity. Residues 147–160 (PPGPTGPAGPPGFP) are compositionally biased toward pro residues. Gly residues predominate over residues 161 to 179 (GGPGAKGDAGAQGGRGPEG). Low complexity-rich tracts occupy residues 180 to 223 (PAGA…AGAP), 232 to 270 (SGPQ…APGV), and 288 to 297 (EPGAAGARGA). Residues 299 to 311 (GERGGPGGRGFPG) are compositionally biased toward gly residues. 4 stretches are compositionally biased toward low complexity: residues 385 to 400 (VGAR…PGPK), 477 to 489 (LPGE…PAGA), 498 to 544 (ERGA…QGMP), and 577 to 592 (RGLT…AGAT). Positions 602 to 611 (GPVGPGGARG) are enriched in gly residues. Low complexity-rich tracts occupy residues 625–661 (AGFA…AGPT) and 675–697 (PKGA…AGRV). Pro residues predominate over residues 699-712 (PPGPSGNPGPPGPA). The span at 804–822 (PGLAGAPGEPGREGSPGNE) shows a compositional bias: low complexity. The segment covering 848–858 (APGPPGAPGPV) has biased composition (pro residues). Over residues 872-893 (PAGPAGSAGPAGPRGPAGALGL) the composition is skewed to low complexity. A compositionally biased stretch (basic and acidic residues) spans 894–908 (RGDKGESGEAGERGM). The span at 924–960 (AGSSGEQGPAGAAGPAGPRGPAGSAGSPGKDGMSGLP) shows a compositional bias: low complexity. Over residues 976–988 (AGPPGPPGPPGAP) the composition is skewed to pro residues. In terms of domain architecture, Fibrillar collagen NC1 spans 1062-1095 (TGTWGKLPLLDLAPMDVGAPDQEFGLEVGPVCFL).

The protein belongs to the fibrillar collagen family.

The protein localises to the secreted. Its subcellular location is the extracellular space. It localises to the extracellular matrix. The chain is Collagen, type I, alpha 1a from Epinephelus caninus (Dogtooth grouper).